A 538-amino-acid chain; its full sequence is Bifunctional purine biosynthesis protein PurH (538 aa).

The region spanning 8 to 158 (IPAPDKVEIK…KNHAYVTILT (151 aa)) is the MGS-like domain.

This sequence belongs to the PurH family.

The catalysed reaction is (6R)-10-formyltetrahydrofolate + 5-amino-1-(5-phospho-beta-D-ribosyl)imidazole-4-carboxamide = 5-formamido-1-(5-phospho-D-ribosyl)imidazole-4-carboxamide + (6S)-5,6,7,8-tetrahydrofolate. It carries out the reaction IMP + H2O = 5-formamido-1-(5-phospho-D-ribosyl)imidazole-4-carboxamide. It functions in the pathway purine metabolism; IMP biosynthesis via de novo pathway; 5-formamido-1-(5-phospho-D-ribosyl)imidazole-4-carboxamide from 5-amino-1-(5-phospho-D-ribosyl)imidazole-4-carboxamide (10-formyl THF route): step 1/1. The protein operates within purine metabolism; IMP biosynthesis via de novo pathway; IMP from 5-formamido-1-(5-phospho-D-ribosyl)imidazole-4-carboxamide: step 1/1. The polypeptide is Bifunctional purine biosynthesis protein PurH (Rhizobium leguminosarum bv. trifolii (strain WSM2304)).